We begin with the raw amino-acid sequence, 169 residues long: Translationally-controlled tumor protein homolog (169 aa).

The TCTP domain maps to 1-169 (MLIYKDILTG…WKHGLEEMKV (169 aa)).

The protein belongs to the TCTP family.

It is found in the cytoplasm. Its subcellular location is the cytoskeleton. Its function is as follows. Involved in protein synthesis. Involved in microtubule stabilization. This is Translationally-controlled tumor protein homolog from Alternaria alternata (Alternaria rot fungus).